The sequence spans 911 residues: Band 3 anion transport protein (911 aa).

An N-acetylmethionine modification is found at Met-1. Acidic residues predominate over residues 1–26 (MEELQDDYEDMMEENLEQEEYEDPDI). A disordered region spans residues 1–40 (MEELQDDYEDMMEENLEQEEYEDPDIPESQMEEPAAHDTE). At 1 to 403 (MEELQDDYED…LSDITDAFSP (403 aa)) the chain is on the cytoplasmic side. Residues Tyr-8, Tyr-21, and Tyr-46 each carry the phosphotyrosine modification. A (Microbial infection) Interaction with P.falciparum (isolate K1) FBPA region spans residues 13–31 (EENLEQEEYEDPDIPESQM). Positions 55–290 (HKVYVELQEL…LGRAAATLMS (236 aa)) are globular. Residues 176–185 (AVLTRSGDPS) form an interaction with ANK1 region. 2 positions are modified to phosphoserine: Ser-185 and Ser-350. Residues 304–357 (RGELLHSLEGFLDCSLVLPPTDAPSEQALLSLVPVQRELLRRRYQSSPAKPDSS) form a dimerization arm region. Tyr-359 is modified (phosphotyrosine). Residues 404 to 427 (QVLAAVIFIYFAALSPAITFGGLL) form a helical membrane-spanning segment. At 428–435 (GEKTRNQM) the chain is on the extracellular side. Residues 436–456 (GVSELLISTAVQGILFALLGA) form a helical membrane-spanning segment. Residues 457 to 459 (QPL) lie on the Cytoplasmic side of the membrane. A discontinuously helical membrane pass occupies residues 460-476 (LVVGFSGPLLVFEEAFF). The Extracellular segment spans residues 477-485 (SFCETNGLE). Residues 486–506 (YIVGRVWIGFWLILLVVLVVA) traverse the membrane as a helical segment. Over 507-518 (FEGSFLVRFISR) the chain is Cytoplasmic. Residues 519 to 541 (YTQEIFSFLISLIFIYETFSKLI) form a helical membrane-spanning segment. Residues 542 to 570 (KIFQDHPLQKTYNYNVLMVPKPQGPLPNT) are Extracellular-facing. Residues 559–630 (MVPKPQGPLP…DFFIQDTYTQ (72 aa)) form an involved in anion transport region. Residues 571 to 591 (ALLSLVLMAGTFFFAMMLRKF) traverse the membrane as a helical segment. Residues 592 to 602 (KNSSYFPGKLR) lie on the Cytoplasmic side of the membrane. The helical transmembrane segment at 603–623 (RVIGDFGVPISILIMVLVDFF) threads the bilayer. Residues 624-663 (IQDTYTQKLSVPDGFKVSNSSARGWVIHPLGLRSEFPIWM) lie on the Extracellular side of the membrane. Residue Asn-642 is glycosylated (N-linked (GlcNAc...) (complex) asparagine). The helical transmembrane segment at 664-684 (MFASALPALLVFILIFLESQI) threads the bilayer. The Cytoplasmic segment spans residues 685–700 (TTLIVSKPERKMVKGS). Residues 701 to 719 (GFHLDLLLVVGMGGVAALF) traverse the membrane as a helical segment. The chain crosses the membrane as a discontinuously helical span at residues 720 to 737 (GMPWLSATTVRSVTHANA). The tract at residues 720–761 (GMPWLSATTVRSVTHANALTVMGKASTPGAAAQIQEVKEQRI) is (Microbial infection) 5ABC region; interaction with P.falciparum (isolate 3D7) MSP9. Residues 738–760 (LTVMGKASTPGAAAQIQEVKEQR) are Cytoplasmic-facing. The next 2 helical transmembrane spans lie at 761–781 (ISGL…PILS) and 782–800 (RIPL…VTSL). Residues 801 to 838 (SGIQLFDRILLLFKPPKYHPDVPYVKRVKTWRMHLFTG) lie on the Cytoplasmic side of the membrane. The segment at residues 839-869 (IQIICLAVLWVVKSTPASLALPFVLILTVPL) is an intramembrane region (discontinuously helical). Cys-843 is lipidated: S-palmitoyl cysteine. Residues 870–911 (RRVLLPLIFRNVELQCLDADDAKATFDEEEGRDEYDEVAMPV) are Cytoplasmic-facing. Tyr-904 carries the post-translational modification Phosphotyrosine.

It belongs to the anion exchanger (TC 2.A.31) family. In terms of assembly, a dimer in solution, but in its membrane environment, it exists primarily as a mixture of dimers and tetramers and spans the membrane asymmetrically. Component of the ankyrin-1 complex in the erythrocyte, composed of ANK1, RHCE, RHAG, SLC4A1, EPB42, GYPA, GYPB and AQP1. Interacts with STOM; this interaction positively regulates SLC4A1 activity. Interacts with GYPA; a GYPA monomer is bound at each end of the SLC4A1 dimer forming a heterotetramer. Three SLC4A1 dimers (Band 3-I, Band 3-II and Band 3-III) participates in the ankyrin-1 complex. Interacts (via the cytoplasmic domain) with EPB42; this interaction is mediated by the SLC4A1 Band 3-I dimer. Interacts (via the cytoplasmic domain) directly with ANK1; this interaction is mediated by the SLC4A1 Band 3-II and Band 3-III dimers. As to quaternary structure, interacts with TMEM139. (Microbial infection) Interacts (via N-terminus) with P.falciparum (isolate K1) aldolase FBPA; the interaction inhibits FBPA catalytic activity. In terms of assembly, (Microbial infection) Interacts (via the 5ABC region) with P.falciparum (isolate 3D7) MSP9/ABRA (via N-terminus). As to quaternary structure, (Microbial infection) Interacts (via the 5ABC region) with P.falciparum (isolate 3D7) MSP1 p42 subunit. Post-translationally, phosphorylated on Tyr-8 and Tyr-21 most likely by SYK. PP1-resistant phosphorylation that precedes Tyr-359 and Tyr-904 phosphorylation. In terms of processing, phosphorylated on Tyr-359 and Tyr-904 most likely by LYN. PP1-inhibited phosphorylation that follows Tyr-8 and Tyr-21 phosphorylation. N-glycosylated. Detected in erythrocytes (at protein level). In terms of tissue distribution, expressed in kidney (at protein level).

It is found in the cell membrane. The protein localises to the basolateral cell membrane. The catalysed reaction is hydrogencarbonate(in) + chloride(out) = hydrogencarbonate(out) + chloride(in). Phenyl isothiocyanate inhibits anion transport in vitro. In terms of biological role, functions both as a transporter that mediates electroneutral anion exchange across the cell membrane and as a structural protein. Component of the ankyrin-1 complex of the erythrocyte membrane; required for normal flexibility and stability of the erythrocyte membrane and for normal erythrocyte shape via the interactions of its cytoplasmic domain with cytoskeletal proteins, glycolytic enzymes, and hemoglobin. Functions as a transporter that mediates the 1:1 exchange of inorganic anions across the erythrocyte membrane. Mediates chloride-bicarbonate exchange in the kidney, and is required for normal acidification of the urine. (Microbial infection) Acts as a receptor for P.falciparum (isolate 3D7) MSP9 and thus, facilitates merozoite invasion of erythrocytes. Acts as a receptor for P.falciparum (isolate 3D7) MSP1 and thus, facilitates merozoite invasion of erythrocytes. In Homo sapiens (Human), this protein is Band 3 anion transport protein.